The following is a 233-amino-acid chain: Small ribosomal subunit protein uS2 (233 aa).

Belongs to the universal ribosomal protein uS2 family.

This is Small ribosomal subunit protein uS2 from Clostridium botulinum (strain Hall / ATCC 3502 / NCTC 13319 / Type A).